The sequence spans 697 residues: MMEELHSLDPRRQELLEARFTGVGVAKAPLNSESSNQSLCSLGSLSDKELEQTPEKKQNDQRNRKRKADPYETSQGKNTPRGHKISDYFEFACGSGPGTSPGRSVPPVARSSPQHSLSNPLPLPSQQCSPPSTAPVNPEHSCASFKHISVQHRCTQSDLTMDKISALENSKSSDLEKKEGRIDDLLRVNCDLRRQMDEQKKMLEKYKERLNRCVTMSKKLLIEKSKQEKMACRDKSMQDRLRLGHFTTVRHGASFTEQWTDGYAFQNLIKQQERINTQREEIERQRKMLAKRKPPAMGQTPPANNEQKQRKNKTNGAENEALTLAEYHEQEEIFKLRLGHLKKEEAEIQAELERLERVRNLHIRELKRIHNEDNSQFKDHPTLNDRYLLLHLLGRGGFSEVYKAFDLTEQRYVAVKIHQLNKNWRDEKKENYHKHACREYRIHKELDHPRIVKLYDYFSLDTDSFCTVLEYCEGNDLDFYLKQHKLMTEKEARSIIMQIVNALKYLNEIKPPIIHYDLKPGNILLVNGTACGEIKITDFGLSKIMDDDSYNSVDGMELTSQGAGTYWYLPPECFVVGKEPPKISNKVDVWSVGVIFYQCLYGRKPFGHNQSQQDILQENTILKATEVQFPPKPVVTPEAKAFIRRCLAYRKEDRIDVQQLACDPYLLPHIRKSVSTSIPANAAVASTSGSSNNSLSN.

2 disordered regions span residues Lys27–Val136 and Leu289–Asn315. Polar residues predominate over residues Asn31–Ser44. A compositionally biased stretch (basic and acidic residues) spans Ser46–Arg62. The segment covering Ser111–Pro131 has biased composition (low complexity). Coiled coils occupy residues Ala264–Lys293 and Phe334–Glu372. Residues Tyr387–Leu666 form the Protein kinase domain. Residues Leu393–Val401 and Lys416 contribute to the ATP site. Asp517 (proton acceptor) is an active-site residue.

Belongs to the protein kinase superfamily. Ser/Thr protein kinase family. As to quaternary structure, monomer. May form homodimers; homodimerization may enhance autophosphoylation and enzymatic activity. Heterodimer with TLK1. Mg(2+) serves as cofactor. Post-translationally, phosphorylated. Autophosphorylated; phosphorylation promotes the assembly of higher order oligomers and enzymatic activity.

The protein resides in the nucleus. The protein localises to the nucleoplasm. It is found in the cytoplasm. Its subcellular location is the perinuclear region. It localises to the cytoskeleton. It catalyses the reaction L-seryl-[protein] + ATP = O-phospho-L-seryl-[protein] + ADP + H(+). It carries out the reaction L-threonyl-[protein] + ATP = O-phospho-L-threonyl-[protein] + ADP + H(+). In terms of biological role, serine/threonine-protein kinase involved in the process of chromatin assembly and probably also DNA replication, transcription, repair, and chromosome segregation. Negative regulator of amino acid starvation-induced autophagy. In Xenopus tropicalis (Western clawed frog), this protein is Serine/threonine-protein kinase tousled-like 2.